Consider the following 264-residue polypeptide: uncharacterized protein (264 aa).

The N-terminal stretch at 1–21 is a signal peptide; that stretch reads MMWNYFVTCIVLYANIISIHT. Residues 182 to 247 form a disordered region; sequence QQPNAAQVPT…AANNGLDLTS (66 aa). Over residues 190–213 the composition is skewed to low complexity; that stretch reads PTTSQQQPTSNTGGQQPPTNASNP. Residue N209 is glycosylated (N-linked (GlcNAc...) asparagine). The span at 214-226 shows a compositional bias: pro residues; the sequence is PTNPQPTPTPAQP. The span at 230–247 shows a compositional bias: polar residues; it reads GTQVQQTPAANNGLDLTS.

Component of the acid-insoluble and acid-soluble organic matrix of calcified layers of the shell (at protein level).

The protein localises to the secreted. This is an uncharacterized protein from Lottia gigantea (Giant owl limpet).